Consider the following 73-residue polypeptide: Homeodomain-only protein (73 aa).

The segment at residues 3–62 is a DNA-binding region (homeobox; degenerate); sequence AEPANGPTEDQVEILEYNFNKVNRHPDPTTLCLIAAEAGLSEEETQKWFKQRLAQWRRSE.

In terms of assembly, interacts with serum response factor (SRF). Component of a large complex containing histone deacetylases such as HDAC2. Interacts with the acetylated forms of HSPA1A and HSPA1B. Interacts with HSPA8.

The protein resides in the nucleus. It is found in the cytoplasm. Atypical homeodomain protein which does not bind DNA and is required to modulate cardiac growth and development. Acts via its interaction with SRF, thereby modulating the expression of SRF-dependent cardiac-specific genes and cardiac development. Prevents SRF-dependent transcription either by inhibiting SRF binding to DNA or by recruiting histone deacetylase (HDAC) proteins that prevent transcription by SRF. Overexpression causes cardiac hypertrophy. Acts as a co-chaperone for HSPA1A and HSPA1B chaperone proteins and assists in chaperone-mediated protein refolding. The chain is Homeodomain-only protein (HOPX) from Sus scrofa (Pig).